The following is a 228-amino-acid chain: Probable methylthioribulose-1-phosphate dehydratase (228 aa).

Cys87 contributes to the substrate binding site. Zn(2+)-binding residues include His105 and His107. The active-site Proton donor/acceptor is the Glu129. His185 provides a ligand contact to Zn(2+).

Belongs to the aldolase class II family. MtnB subfamily. It depends on Zn(2+) as a cofactor.

The protein localises to the cytoplasm. The catalysed reaction is 5-(methylsulfanyl)-D-ribulose 1-phosphate = 5-methylsulfanyl-2,3-dioxopentyl phosphate + H2O. It participates in amino-acid biosynthesis; L-methionine biosynthesis via salvage pathway; L-methionine from S-methyl-5-thio-alpha-D-ribose 1-phosphate: step 2/6. Functionally, catalyzes the dehydration of methylthioribulose-1-phosphate (MTRu-1-P) into 2,3-diketo-5-methylthiopentyl-1-phosphate (DK-MTP-1-P). The sequence is that of Probable methylthioribulose-1-phosphate dehydratase from Drosophila willistoni (Fruit fly).